The following is a 131-amino-acid chain: Proteinase inhibitor (131 aa).

The signal sequence occupies residues 1 to 26 (MSASAKLSRMVCLLCGFFSTGISMAS). An intrachain disulfide couples Cys-51 to Cys-74.

The protein belongs to the protease inhibitor I38 family.

The protein localises to the periplasm. Functionally, inhibitor of the alkaline protease. It forms a non-covalent bond with the protease and may prevent its autocatalytic cleavage in the periplasm. In Pseudomonas aeruginosa (strain ATCC 15692 / DSM 22644 / CIP 104116 / JCM 14847 / LMG 12228 / 1C / PRS 101 / PAO1), this protein is Proteinase inhibitor (inh).